A 209-amino-acid polypeptide reads, in one-letter code: Large ribosomal subunit protein uL3 (209 aa).

The protein belongs to the universal ribosomal protein uL3 family. Part of the 50S ribosomal subunit. Forms a cluster with proteins L14 and L19.

Functionally, one of the primary rRNA binding proteins, it binds directly near the 3'-end of the 23S rRNA, where it nucleates assembly of the 50S subunit. The sequence is that of Large ribosomal subunit protein uL3 from Nitratidesulfovibrio vulgaris (strain ATCC 29579 / DSM 644 / CCUG 34227 / NCIMB 8303 / VKM B-1760 / Hildenborough) (Desulfovibrio vulgaris).